The chain runs to 233 residues: Large ribosomal subunit protein uL1 (233 aa).

This sequence belongs to the universal ribosomal protein uL1 family. In terms of assembly, part of the 50S ribosomal subunit.

Functionally, binds directly to 23S rRNA. The L1 stalk is quite mobile in the ribosome, and is involved in E site tRNA release. In terms of biological role, protein L1 is also a translational repressor protein, it controls the translation of the L11 operon by binding to its mRNA. This Proteus mirabilis (strain HI4320) protein is Large ribosomal subunit protein uL1.